The following is a 137-amino-acid chain: Large ribosomal subunit protein uL13 (137 aa).

Belongs to the universal ribosomal protein uL13 family. As to quaternary structure, part of the 50S ribosomal subunit.

This protein is one of the early assembly proteins of the 50S ribosomal subunit, although it is not seen to bind rRNA by itself. It is important during the early stages of 50S assembly. This chain is Large ribosomal subunit protein uL13, found in Methanocaldococcus jannaschii (strain ATCC 43067 / DSM 2661 / JAL-1 / JCM 10045 / NBRC 100440) (Methanococcus jannaschii).